The following is a 248-amino-acid chain: Isoprenyl transferase (248 aa).

Residue aspartate 28 is part of the active site. A Mg(2+)-binding site is contributed by aspartate 28. Residues 29 to 32 (GNGR), tryptophan 33, arginine 41, histidine 45, and 73 to 75 (SSE) each bind substrate. Asparagine 76 acts as the Proton acceptor in catalysis. Substrate-binding positions include tryptophan 77, arginine 79, arginine 196, and 202-204 (RLS). Glutamate 215 contributes to the Mg(2+) binding site.

Belongs to the UPP synthase family. In terms of assembly, homodimer. Mg(2+) serves as cofactor.

In terms of biological role, catalyzes the condensation of isopentenyl diphosphate (IPP) with allylic pyrophosphates generating different type of terpenoids. This Zymomonas mobilis subsp. mobilis (strain ATCC 31821 / ZM4 / CP4) protein is Isoprenyl transferase.